Reading from the N-terminus, the 702-residue chain is Glucoamylase (702 aa).

A signal peptide spans 1–21; the sequence is MSRKLIKYLPLLVLASSVLSG. Residue Cys22 is the site of N-palmitoyl cysteine attachment. The S-diacylglycerol cysteine moiety is linked to residue Cys22. Trp342 is a substrate binding site. Glu452 acts as the Proton acceptor in catalysis. The active-site Proton donor is Glu455.

This sequence belongs to the glycosyl hydrolase 15 family.

The protein localises to the cell membrane. It carries out the reaction Hydrolysis of terminal (1-&gt;4)-linked alpha-D-glucose residues successively from non-reducing ends of the chains with release of beta-D-glucose.. Functionally, CGA has typical kinetic properties for a glucoamylase, but this bacterial enzyme had higher isomaltose-hydrolyzing activity than other eukaryotic glucoamylases. In Clostridium sp. (strain G0005), this protein is Glucoamylase (cga).